We begin with the raw amino-acid sequence, 569 residues long: Urease subunit alpha (569 aa).

The Urease domain occupies 131–569 (GGMDAHIHFI…LPMAQRYFLF (439 aa)). Positions 136, 138, and 218 each coordinate Ni(2+). The residue at position 218 (Lys-218) is an N6-carboxylysine. His-220 serves as a coordination point for substrate. His-247 and His-273 together coordinate Ni(2+). His-321 serves as the catalytic Proton donor. Asp-361 is a binding site for Ni(2+).

It belongs to the metallo-dependent hydrolases superfamily. Urease alpha subunit family. As to quaternary structure, heterotrimer of UreA (gamma), UreB (beta) and UreC (alpha) subunits. Three heterotrimers associate to form the active enzyme. The cofactor is Ni cation. In terms of processing, carboxylation allows a single lysine to coordinate two nickel ions.

It localises to the cytoplasm. It catalyses the reaction urea + 2 H2O + H(+) = hydrogencarbonate + 2 NH4(+). The protein operates within nitrogen metabolism; urea degradation; CO(2) and NH(3) from urea (urease route): step 1/1. This is Urease subunit alpha from Rhizobium rhizogenes (strain K84 / ATCC BAA-868) (Agrobacterium radiobacter).